The sequence spans 873 residues: Valine--tRNA ligase (873 aa).

The short motif at 43 to 53 (PNVTGVLHMGH) is the 'HIGH' region element. The 'KMSKS' region signature appears at 532-536 (KMSKS). Lys-535 lines the ATP pocket. A coiled-coil region spans residues 802-873 (LGNLINVEEE…IEESIAALTK (72 aa)).

It belongs to the class-I aminoacyl-tRNA synthetase family. ValS type 1 subfamily. In terms of assembly, monomer.

It localises to the cytoplasm. It catalyses the reaction tRNA(Val) + L-valine + ATP = L-valyl-tRNA(Val) + AMP + diphosphate. Catalyzes the attachment of valine to tRNA(Val). As ValRS can inadvertently accommodate and process structurally similar amino acids such as threonine, to avoid such errors, it has a 'posttransfer' editing activity that hydrolyzes mischarged Thr-tRNA(Val) in a tRNA-dependent manner. The sequence is that of Valine--tRNA ligase from Parabacteroides distasonis (strain ATCC 8503 / DSM 20701 / CIP 104284 / JCM 5825 / NCTC 11152).